The sequence spans 906 residues: MTELAELDRFTAELPFSLDDFQQRACSALERGHGVLVCAPTGAGKTVVGEFAVHLALAAGSKCFYTTPLKALSNQKHTDLTARYGRDQIGLLTGDLSVNGNAPVVVMTTEVLRNMLYADSPALQGLSYVVMDEVHFLADRMRGPVWEEVILQLPDDVRVVSLSATVSNAEEFGGWIQTVRGDTTVVVDEHRPVPLWQHVLVGKRMFDLFDYRIGEAEGQPQVNRELLRHIAHRREADRMADWQPRRRGSGRPGFYRPPGRPEVIAKLDAEGLLPAITFVFSRAGCDAAVTQCLRSPLRLTSEEERARIAEVIDHRCGDLADSDLAVLGYYEWREGLLRGLAAHHAGMLPAFRHTVEELFTAGLVKAVFATETLALGINMPARTVVLERLVKFNGEQHMPLTPGEYTQLTGRAGRRGIDVEGHAVVIWHPEIEPSEVAGLASTRTFPLRSSFAPSYNMTINLVHRMGPQQAHRLLEQSFAQYQADRSVVGLVRGIERGNRILGEIAAELGGSDAPILEYARLRARVSELERAQARASRLQRRQAATDALAALRRGDIITITHGRRGGLAVVLESARDRDDPRPLVLTEHRWAGRISSADYSGTTPVGSMTLPKRVEHRQPRVRRDLASALRSAAAGLVIPAARRVSEAGGFHDPELESSREQLRRHPVHTSPGLEDQIRQAERYLRIERDNAQLERKVAAATNSLARTFDRFVGLLTEREFIDGPATDPVVTDDGRLLARIYSESDLLVAECLRTGAWEGLKPAELAGVVSAVVYETRGGDGQGAPFGADVPTPRLRQALTQTSRLSTTLRADEQAHRITPSREPDDGFVRVIYRWSRTGDLAAALAAADVNGSGSPLLAGDFVRWCRQVLDLLDQVRNAAPNPELRATAKRAIGDIRRGVVAVDAG.

In terms of domain architecture, Helicase ATP-binding spans 26-184 (CSALERGHGV…WIQTVRGDTT (159 aa)). 39–46 (APTGAGKT) contacts ATP. The short motif at 132–135 (DEVH) is the DEVH box element. One can recognise a Helicase C-terminal domain in the interval 259-463 (GRPEVIAKLD…SYNMTINLVH (205 aa)).

It belongs to the helicase family. SKI2 subfamily.

In Mycobacterium tuberculosis (strain CDC 1551 / Oshkosh), this protein is Probable helicase HelY (helY).